We begin with the raw amino-acid sequence, 364 residues long: Aminomethyltransferase (364 aa).

The protein belongs to the GcvT family. As to quaternary structure, the glycine cleavage system is composed of four proteins: P, T, L and H.

The enzyme catalyses N(6)-[(R)-S(8)-aminomethyldihydrolipoyl]-L-lysyl-[protein] + (6S)-5,6,7,8-tetrahydrofolate = N(6)-[(R)-dihydrolipoyl]-L-lysyl-[protein] + (6R)-5,10-methylene-5,6,7,8-tetrahydrofolate + NH4(+). In terms of biological role, the glycine cleavage system catalyzes the degradation of glycine. The sequence is that of Aminomethyltransferase from Anoxybacillus flavithermus (strain DSM 21510 / WK1).